Reading from the N-terminus, the 407-residue chain is MKYDHLLVRYGELTLKGSNRKKFVNQLRNNVNKSLKGLDGFVVKGKRDRMYIELEDHADINEITYRLSKIFGIKSISPVLKVEKTLEAMSAAAIKFAQQFEENSTFKIDVKRADKNFPMDTYELQRELGGAVLKHFDNISVNVKRPDHEIRVEVRLDAIYMYEEVVAGAGGLPVGTGGKTLLMLSGGIDSPVAGMEVMRRGVTIEAIHFHSPPFTSDQAKEKVIELTRILAERVGPIKLHIVPFTELQKQVNKVVHPRYTMTSTRRMMMRVADKLVHQIGALAIVNGENLGQVASQTLHSMYAINNVTSTPVLRPLLTYDKEEIIIKSKEIGTFETSIQPFEDCCTIFTPKNPVTEPNFDKVVQYESVFDFEEMINRAVENIETLEITSDYKTIKEQQTNQLINDFL.

A THUMP domain is found at 61 to 165 (NEITYRLSKI…LDAIYMYEEV (105 aa)). ATP contacts are provided by residues 183–184 (ML), 208–209 (HF), arginine 265, glycine 287, and glutamine 296.

This sequence belongs to the ThiI family.

The protein localises to the cytoplasm. The enzyme catalyses [ThiI sulfur-carrier protein]-S-sulfanyl-L-cysteine + a uridine in tRNA + 2 reduced [2Fe-2S]-[ferredoxin] + ATP + H(+) = [ThiI sulfur-carrier protein]-L-cysteine + a 4-thiouridine in tRNA + 2 oxidized [2Fe-2S]-[ferredoxin] + AMP + diphosphate. The catalysed reaction is [ThiS sulfur-carrier protein]-C-terminal Gly-Gly-AMP + S-sulfanyl-L-cysteinyl-[cysteine desulfurase] + AH2 = [ThiS sulfur-carrier protein]-C-terminal-Gly-aminoethanethioate + L-cysteinyl-[cysteine desulfurase] + A + AMP + 2 H(+). The protein operates within cofactor biosynthesis; thiamine diphosphate biosynthesis. Its function is as follows. Catalyzes the ATP-dependent transfer of a sulfur to tRNA to produce 4-thiouridine in position 8 of tRNAs, which functions as a near-UV photosensor. Also catalyzes the transfer of sulfur to the sulfur carrier protein ThiS, forming ThiS-thiocarboxylate. This is a step in the synthesis of thiazole, in the thiamine biosynthesis pathway. The sulfur is donated as persulfide by IscS. In Staphylococcus aureus (strain bovine RF122 / ET3-1), this protein is Probable tRNA sulfurtransferase.